Here is a 430-residue protein sequence, read N- to C-terminus: Glutamate-1-semialdehyde 2,1-aminomutase (430 aa).

Lys265 carries the post-translational modification N6-(pyridoxal phosphate)lysine.

Belongs to the class-III pyridoxal-phosphate-dependent aminotransferase family. HemL subfamily. In terms of assembly, homodimer. Pyridoxal 5'-phosphate is required as a cofactor.

It localises to the cytoplasm. The enzyme catalyses (S)-4-amino-5-oxopentanoate = 5-aminolevulinate. It participates in porphyrin-containing compound metabolism; protoporphyrin-IX biosynthesis; 5-aminolevulinate from L-glutamyl-tRNA(Glu): step 2/2. The sequence is that of Glutamate-1-semialdehyde 2,1-aminomutase from Shewanella sp. (strain MR-4).